The following is a 562-amino-acid chain: Arginine--tRNA ligase (562 aa).

The 'HIGH' region signature appears at 129-139 (ANPTGPLHVGH).

Belongs to the class-I aminoacyl-tRNA synthetase family. Monomer.

The protein resides in the cytoplasm. It catalyses the reaction tRNA(Arg) + L-arginine + ATP = L-arginyl-tRNA(Arg) + AMP + diphosphate. The protein is Arginine--tRNA ligase of Xanthomonas axonopodis pv. citri (strain 306).